A 285-amino-acid polypeptide reads, in one-letter code: Small ribosomal subunit protein mS23 (285 aa).

Belongs to the mitochondrion-specific ribosomal protein mS23 family. As to quaternary structure, component of the mitochondrial small ribosomal subunit.

Its subcellular location is the mitochondrion. The chain is Small ribosomal subunit protein mS23 (RSM25) from Debaryomyces hansenii (strain ATCC 36239 / CBS 767 / BCRC 21394 / JCM 1990 / NBRC 0083 / IGC 2968) (Yeast).